Reading from the N-terminus, the 532-residue chain is Nitrogenase molybdenum-iron protein alpha chain (532 aa).

Cys-62, Cys-88, and Cys-153 together coordinate [8Fe-7S] cluster. Residues Cys-271 and His-489 each coordinate [7Fe-Mo-9S-C-homocitryl] cluster.

This sequence belongs to the NifD/NifK/NifE/NifN family. Tetramer of two alpha and two beta chains. Forms complex with the iron protein (nitrogenase component 2). It depends on [8Fe-7S] cluster as a cofactor. Requires [7Fe-Mo-9S-C-homocitryl] cluster as cofactor.

It carries out the reaction N2 + 8 reduced [2Fe-2S]-[ferredoxin] + 16 ATP + 16 H2O = H2 + 8 oxidized [2Fe-2S]-[ferredoxin] + 2 NH4(+) + 16 ADP + 16 phosphate + 6 H(+). Functionally, this molybdenum-iron protein is part of the nitrogenase complex that catalyzes the key enzymatic reactions in nitrogen fixation. This is Nitrogenase molybdenum-iron protein alpha chain (nifD2) from Methanosarcina barkeri.